The chain runs to 340 residues: Anthranilate phosphoribosyltransferase (340 aa).

5-phospho-alpha-D-ribose 1-diphosphate is bound by residues G83, 86–87, T91, 93–96, 111–119, and S123; these read GD, NVST, and KHGNRSVSS. Position 83 (G83) interacts with anthranilate. S95 contacts Mg(2+). N114 lines the anthranilate pocket. Anthranilate is bound at residue R169. Residues D228 and E229 each coordinate Mg(2+).

The protein belongs to the anthranilate phosphoribosyltransferase family. In terms of assembly, homodimer. Mg(2+) is required as a cofactor.

It carries out the reaction N-(5-phospho-beta-D-ribosyl)anthranilate + diphosphate = 5-phospho-alpha-D-ribose 1-diphosphate + anthranilate. It functions in the pathway amino-acid biosynthesis; L-tryptophan biosynthesis; L-tryptophan from chorismate: step 2/5. Catalyzes the transfer of the phosphoribosyl group of 5-phosphorylribose-1-pyrophosphate (PRPP) to anthranilate to yield N-(5'-phosphoribosyl)-anthranilate (PRA). The protein is Anthranilate phosphoribosyltransferase of Aquifex aeolicus (strain VF5).